Here is a 170-residue protein sequence, read N- to C-terminus: Protein SprT (170 aa).

A SprT-like domain is found at 22 to 165 (LQLANQHLGT…RQCGEKLQFI (144 aa)). A Zn(2+)-binding site is contributed by His-78. Glu-79 is a catalytic residue. His-82 provides a ligand contact to Zn(2+).

The protein belongs to the SprT family. It depends on Zn(2+) as a cofactor.

The protein resides in the cytoplasm. The chain is Protein SprT from Yersinia pseudotuberculosis serotype IB (strain PB1/+).